We begin with the raw amino-acid sequence, 62 residues long: Conotoxin Gm5.2 (62 aa).

Positions 1 to 22 are cleaved as a signal peptide; sequence MRCLPVFVILLLLIASAPSVDA. Residues 23-49 constitute a propeptide that is removed on maturation; it reads QPKTKDDVPLAPLHDNIRSTLQTLRKK. Serine amide is present on Ser60.

The protein belongs to the conotoxin T superfamily. Contains 2 disulfide bonds that can be either 'C1-C3, C2-C4' or 'C1-C4, C2-C3', since these disulfide connectivities have been observed for conotoxins with cysteine framework V (for examples, see AC P0DQQ7 and AC P81755). Expressed by the venom duct.

Its subcellular location is the secreted. This is Conotoxin Gm5.2 from Conus gloriamaris (Glory-of-the-Sea cone).